A 288-amino-acid polypeptide reads, in one-letter code: Quinate/shikimate dehydrogenase (288 aa).

Substrate contacts are provided by Lys-71 and Asp-107. Residues 132–135, 155–158, Lys-205, 232–235, and Gly-255 each bind NAD(+); these read AGGA, NRRD, and CVYN.

The protein belongs to the shikimate dehydrogenase family. As to quaternary structure, homodimer.

It carries out the reaction L-quinate + NAD(+) = 3-dehydroquinate + NADH + H(+). The catalysed reaction is L-quinate + NADP(+) = 3-dehydroquinate + NADPH + H(+). It catalyses the reaction shikimate + NADP(+) = 3-dehydroshikimate + NADPH + H(+). The enzyme catalyses shikimate + NAD(+) = 3-dehydroshikimate + NADH + H(+). Its pathway is metabolic intermediate biosynthesis; chorismate biosynthesis; chorismate from D-erythrose 4-phosphate and phosphoenolpyruvate: step 4/7. In terms of biological role, the actual biological function of YdiB remains unclear, nor is it known whether 3-dehydroshikimate or quinate represents the natural substrate. Catalyzes the reversible NAD-dependent reduction of both 3-dehydroshikimate (DHSA) and 3-dehydroquinate to yield shikimate (SA) and quinate, respectively. It can use both NAD or NADP for catalysis, however it has higher catalytic efficiency with NAD. This Shigella sonnei (strain Ss046) protein is Quinate/shikimate dehydrogenase.